Here is a 123-residue protein sequence, read N- to C-terminus: uncharacterized protein (123 aa).

Helical transmembrane passes span 9 to 31, 38 to 56, 67 to 91, and 98 to 114; these read LLLRFTLEIAALISLGVYAWISF, VLTLVLPIAVMIVWSVFAV, VIAVNGVTRLVIELLIFAMAVAALY, and VSIVFLCLIILHYIISA.

The protein to E.coli YhgE.

Its subcellular location is the cell membrane. This is an uncharacterized protein from Bacillus subtilis (strain 168).